The sequence spans 187 residues: dTTP/UTP pyrophosphatase (187 aa).

Asp64 (proton acceptor) is an active-site residue.

The protein belongs to the Maf family. YhdE subfamily. Requires a divalent metal cation as cofactor.

The protein resides in the cytoplasm. It catalyses the reaction dTTP + H2O = dTMP + diphosphate + H(+). The catalysed reaction is UTP + H2O = UMP + diphosphate + H(+). Nucleoside triphosphate pyrophosphatase that hydrolyzes dTTP and UTP. May have a dual role in cell division arrest and in preventing the incorporation of modified nucleotides into cellular nucleic acids. This chain is dTTP/UTP pyrophosphatase, found in Leptospira interrogans serogroup Icterohaemorrhagiae serovar Lai (strain 56601).